A 156-amino-acid chain; its full sequence is Arginine repressor (156 aa).

This sequence belongs to the ArgR family.

The protein resides in the cytoplasm. It participates in amino-acid biosynthesis; L-arginine biosynthesis [regulation]. Functionally, regulates arginine biosynthesis genes. The polypeptide is Arginine repressor (Photobacterium profundum (strain SS9)).